The primary structure comprises 55 residues: Large ribosomal subunit protein bL32 (55 aa).

Residues 1-19 (MAVPKRRMSRANTHTRRSQ) show a composition bias toward basic residues. The interval 1 to 21 (MAVPKRRMSRANTHTRRSQWK) is disordered.

Belongs to the bacterial ribosomal protein bL32 family.

The polypeptide is Large ribosomal subunit protein bL32 (Corynebacterium kroppenstedtii (strain DSM 44385 / JCM 11950 / CIP 105744 / CCUG 35717)).